A 72-amino-acid polypeptide reads, in one-letter code: Beta-defensin 104A (72 aa).

Residues 1-22 form the signal peptide; the sequence is MRRLVLLLAISLLLYQDLPVRS. 3 disulfide bridges follow: cysteine 30-cysteine 57, cysteine 37-cysteine 51, and cysteine 41-cysteine 58.

The protein belongs to the beta-defensin family.

It localises to the secreted. In terms of biological role, has antimicrobial activity. The polypeptide is Beta-defensin 104A (DEFB104A) (Pongo pygmaeus (Bornean orangutan)).